The chain runs to 507 residues: ATP synthase subunit alpha, chloroplastic (507 aa).

ATP is bound at residue 170-177 (GDRQTGKT).

This sequence belongs to the ATPase alpha/beta chains family. F-type ATPases have 2 components, CF(1) - the catalytic core - and CF(0) - the membrane proton channel. CF(1) has five subunits: alpha(3), beta(3), gamma(1), delta(1), epsilon(1). CF(0) has four main subunits: a, b, b' and c.

The protein localises to the plastid. The protein resides in the chloroplast thylakoid membrane. It carries out the reaction ATP + H2O + 4 H(+)(in) = ADP + phosphate + 5 H(+)(out). Functionally, produces ATP from ADP in the presence of a proton gradient across the membrane. The alpha chain is a regulatory subunit. In Phalaenopsis aphrodite subsp. formosana (Moth orchid), this protein is ATP synthase subunit alpha, chloroplastic.